The chain runs to 490 residues: Cytochrome P450 2C19 (490 aa).

Position 435 (C435) interacts with heme.

The protein belongs to the cytochrome P450 family. It depends on heme as a cofactor.

Its subcellular location is the endoplasmic reticulum membrane. The protein resides in the microsome membrane. The enzyme catalyses an organic molecule + reduced [NADPH--hemoprotein reductase] + O2 = an alcohol + oxidized [NADPH--hemoprotein reductase] + H2O + H(+). It carries out the reaction (5Z,8Z,11Z)-eicosatrienoate + reduced [NADPH--hemoprotein reductase] + O2 = 19-hydroxy-(5Z,8Z,11Z)-eicosatrienoate + oxidized [NADPH--hemoprotein reductase] + H2O + H(+). It catalyses the reaction (5Z,8Z,11Z,14Z)-eicosatetraenoate + reduced [NADPH--hemoprotein reductase] + O2 = 19-hydroxy-(5Z,8Z,11Z,14Z)-eicosatetraenoate + oxidized [NADPH--hemoprotein reductase] + H2O + H(+). The catalysed reaction is (5Z,8Z,11Z,14Z,17Z)-eicosapentaenoate + reduced [NADPH--hemoprotein reductase] + O2 = 19-hydroxy-(5Z,8Z,11Z,14Z,17Z)-eicosapentaenoate + oxidized [NADPH--hemoprotein reductase] + H2O + H(+). The enzyme catalyses (4Z,7Z,10Z,13Z,16Z,19Z)-docosahexaenoate + reduced [NADPH--hemoprotein reductase] + O2 = 21-hydroxy-(4Z,7Z,10Z,13Z,16Z,19Z)-docosahexaenoate + oxidized [NADPH--hemoprotein reductase] + H2O + H(+). It carries out the reaction (5Z,8Z,11Z,14Z)-eicosatetraenoate + reduced [NADPH--hemoprotein reductase] + O2 = (8R,9S)-epoxy-(5Z,11Z,14Z)-eicosatrienoate + oxidized [NADPH--hemoprotein reductase] + H2O + H(+). It catalyses the reaction (5Z,8Z,11Z,14Z)-eicosatetraenoate + reduced [NADPH--hemoprotein reductase] + O2 = (11R,12S)-epoxy-(5Z,8Z,14Z)-eicosatrienoate + oxidized [NADPH--hemoprotein reductase] + H2O + H(+). The catalysed reaction is (5Z,8Z,11Z,14Z)-eicosatetraenoate + reduced [NADPH--hemoprotein reductase] + O2 = (11S,12R)-epoxy-(5Z,8Z,14Z)-eicosatrienoate + oxidized [NADPH--hemoprotein reductase] + H2O + H(+). The enzyme catalyses (5Z,8Z,11Z,14Z)-eicosatetraenoate + reduced [NADPH--hemoprotein reductase] + O2 = (14R,15S)-epoxy-(5Z,8Z,11Z)-eicosatrienoate + oxidized [NADPH--hemoprotein reductase] + H2O + H(+). It carries out the reaction (5Z,8Z,11Z,14Z,17Z)-eicosapentaenoate + reduced [NADPH--hemoprotein reductase] + O2 = (17R,18S)-epoxy-(5Z,8Z,11Z,14Z)-eicosatetraenoate + oxidized [NADPH--hemoprotein reductase] + H2O + H(+). It catalyses the reaction (4Z,7Z,10Z,13Z,16Z,19Z)-docosahexaenoate + reduced [NADPH--hemoprotein reductase] + O2 = (19R,20S)-epoxy-(4Z,7Z,10Z,13Z,16Z)-docosapentaenoate + oxidized [NADPH--hemoprotein reductase] + H2O + H(+). The catalysed reaction is (4Z,7Z,10Z,13Z,16Z,19Z)-docosahexaenoate + reduced [NADPH--hemoprotein reductase] + O2 = (19S,20R)-epoxy-(4Z,7Z,10Z,13Z,16Z)-docosapentaenoate + oxidized [NADPH--hemoprotein reductase] + H2O + H(+). The enzyme catalyses (4R)-limonene + reduced [NADPH--hemoprotein reductase] + O2 = (1R,5S)-carveol + oxidized [NADPH--hemoprotein reductase] + H2O + H(+). It carries out the reaction (4S)-limonene + reduced [NADPH--hemoprotein reductase] + O2 = (1S,5R)-carveol + oxidized [NADPH--hemoprotein reductase] + H2O + H(+). It catalyses the reaction (4S)-limonene + reduced [NADPH--hemoprotein reductase] + O2 = (4S)-perillyl alcohol + oxidized [NADPH--hemoprotein reductase] + H2O + H(+). The catalysed reaction is fenbendazole + reduced [NADPH--hemoprotein reductase] + O2 = 4'-hydroxyfenbendazole + oxidized [NADPH--hemoprotein reductase] + H2O + H(+). It functions in the pathway lipid metabolism; fatty acid metabolism. Its pathway is terpene metabolism; (4R)-limonene degradation. Its function is as follows. A cytochrome P450 monooxygenase involved in the metabolism of polyunsaturated fatty acids (PUFA). Mechanistically, uses molecular oxygen inserting one oxygen atom into a substrate, and reducing the second into a water molecule, with two electrons provided by NADPH via cytochrome P450 reductase (NADPH--hemoprotein reductase). Catalyzes the hydroxylation of carbon-hydrogen bonds. Hydroxylates PUFA specifically at the omega-1 position. Catalyzes the epoxidation of double bonds of PUFA. Also metabolizes plant monoterpenes such as limonene. Oxygenates (R)- and (S)-limonene to produce carveol and perillyl alcohol. Responsible for the metabolism of a number of therapeutic agents such as the anticonvulsant drug S-mephenytoin, omeprazole, proguanil, certain barbiturates, diazepam, propranolol, citalopram and imipramine. Hydroxylates fenbendazole at the 4' position. The polypeptide is Cytochrome P450 2C19 (CYP2C19) (Homo sapiens (Human)).